The sequence spans 364 residues: MRVLAAMSGGVDSAVAAARAVAAGHDVVGVHLALSAEPGTLRTGSRGCCSKEDAGDARRAADVLGIPFYVWDFADRFKEDVIDDFVASYAAGETPNPCLRCNEKIKFAALADRAIALGFDAVATGHYAQLENGVLRRAVDADKDQSYVLGVLTAEQLSRAMFPVGDTPKDRIREEAAERGLAVANKPDSHDICFIPSGDTRAFLGARIGVRPGSVVDADSGEVLAEHEGVHGFTIGQRKGLGVQGPAADGQPRYVTSIEPDTGTVRVGSARNLEVDAITADRAVWTSGSTPVGPVECTVQVRAHGGLAEAVAEAVDGGIAISLREPLTGVAKGQAVVLYRTDPAGDIVLGSGTISGTDARPNTQ.

ATP-binding positions include 6–13 and Leu32; that span reads AMSGGVDS. Residue Cys101 is the Nucleophile of the active site. Cysteines 101 and 193 form a disulfide. Residue Gly125 participates in ATP binding. The interval 143-145 is interaction with tRNA; that stretch reads KDQ. Catalysis depends on Cys193, which acts as the Cysteine persulfide intermediate.

This sequence belongs to the MnmA/TRMU family.

The protein resides in the cytoplasm. The enzyme catalyses S-sulfanyl-L-cysteinyl-[protein] + uridine(34) in tRNA + AH2 + ATP = 2-thiouridine(34) in tRNA + L-cysteinyl-[protein] + A + AMP + diphosphate + H(+). Its function is as follows. Catalyzes the 2-thiolation of uridine at the wobble position (U34) of tRNA, leading to the formation of s(2)U34. This is tRNA-specific 2-thiouridylase MnmA from Rhodococcus jostii (strain RHA1).